Here is a 995-residue protein sequence, read N- to C-terminus: Bifunctional glutamine synthetase adenylyltransferase/adenylyl-removing enzyme (995 aa).

Residues 1–487 form an adenylyl removase region; that stretch reads MNVTKPATQR…LHAKLFYQPL (487 aa). Residues 492–995 are adenylyl transferase; that stretch reads APAGLEIAGR…KAVVRKVFGS (504 aa).

Belongs to the GlnE family. Mg(2+) is required as a cofactor.

The enzyme catalyses [glutamine synthetase]-O(4)-(5'-adenylyl)-L-tyrosine + phosphate = [glutamine synthetase]-L-tyrosine + ADP. It catalyses the reaction [glutamine synthetase]-L-tyrosine + ATP = [glutamine synthetase]-O(4)-(5'-adenylyl)-L-tyrosine + diphosphate. In terms of biological role, involved in the regulation of glutamine synthetase GlnA, a key enzyme in the process to assimilate ammonia. When cellular nitrogen levels are high, the C-terminal adenylyl transferase (AT) inactivates GlnA by covalent transfer of an adenylyl group from ATP to specific tyrosine residue of GlnA, thus reducing its activity. Conversely, when nitrogen levels are low, the N-terminal adenylyl removase (AR) activates GlnA by removing the adenylyl group by phosphorolysis, increasing its activity. The regulatory region of GlnE binds the signal transduction protein PII (GlnB) which indicates the nitrogen status of the cell. The sequence is that of Bifunctional glutamine synthetase adenylyltransferase/adenylyl-removing enzyme from Mycobacterium marinum (strain ATCC BAA-535 / M).